Reading from the N-terminus, the 167-residue chain is MAGTNPRAARIAALIQRVIASSMEAQLHDKRLANVTITEVRVTNDLQIAKVYWTQLGHEGHEQGERRRAQQALNQAKGRLRSLVGTKAGLRLTPQLEFIFDEVPGEAHEIEDILALAHKRDEELAKSRANAQYAGDADPYKHDEPDDDDFDDDDDVEVEDWDDDDEA.

The disordered stretch occupies residues 127 to 167; the sequence is SRANAQYAGDADPYKHDEPDDDDFDDDDDVEVEDWDDDDEA. Residues 145 to 167 are compositionally biased toward acidic residues; it reads PDDDDFDDDDDVEVEDWDDDDEA.

This sequence belongs to the RbfA family. In terms of assembly, monomer. Binds 30S ribosomal subunits, but not 50S ribosomal subunits or 70S ribosomes.

It is found in the cytoplasm. Its function is as follows. One of several proteins that assist in the late maturation steps of the functional core of the 30S ribosomal subunit. Associates with free 30S ribosomal subunits (but not with 30S subunits that are part of 70S ribosomes or polysomes). Required for efficient processing of 16S rRNA. May interact with the 5'-terminal helix region of 16S rRNA. In Bifidobacterium adolescentis (strain ATCC 15703 / DSM 20083 / NCTC 11814 / E194a), this protein is Ribosome-binding factor A.